The primary structure comprises 93 residues: Small ribosomal subunit protein uS19 (93 aa).

The protein belongs to the universal ribosomal protein uS19 family.

Its function is as follows. Protein S19 forms a complex with S13 that binds strongly to the 16S ribosomal RNA. This chain is Small ribosomal subunit protein uS19, found in Clostridium acetobutylicum (strain ATCC 824 / DSM 792 / JCM 1419 / IAM 19013 / LMG 5710 / NBRC 13948 / NRRL B-527 / VKM B-1787 / 2291 / W).